The sequence spans 52 residues: Insulin (52 aa).

Intrachain disulfides connect Cys-7–Cys-38, Cys-19–Cys-51, and Cys-37–Cys-42.

The protein belongs to the insulin family. In terms of assembly, heterodimer of a B chain and an A chain linked by two disulfide bonds.

The protein resides in the secreted. In terms of biological role, insulin decreases blood glucose concentration. It increases cell permeability to monosaccharides, amino acids and fatty acids. It accelerates glycolysis, the pentose phosphate cycle, and glycogen synthesis in liver. This Acipenser gueldenstaedtii (Russian sturgeon) protein is Insulin (ins).